We begin with the raw amino-acid sequence, 398 residues long: Argininosuccinate synthase (398 aa).

8–16 (AYSGGLDTS) serves as a coordination point for ATP. Tyrosine 87 contacts L-citrulline. Residue glycine 117 participates in ATP binding. Positions 119, 123, and 124 each coordinate L-aspartate. Asparagine 123 lines the L-citrulline pocket. 4 residues coordinate L-citrulline: arginine 127, serine 175, glutamate 260, and tyrosine 272.

This sequence belongs to the argininosuccinate synthase family. Type 1 subfamily. In terms of assembly, homotetramer.

The protein resides in the cytoplasm. The enzyme catalyses L-citrulline + L-aspartate + ATP = 2-(N(omega)-L-arginino)succinate + AMP + diphosphate + H(+). Its pathway is amino-acid biosynthesis; L-arginine biosynthesis; L-arginine from L-ornithine and carbamoyl phosphate: step 2/3. This chain is Argininosuccinate synthase, found in Mycobacterium marinum (strain ATCC BAA-535 / M).